Reading from the N-terminus, the 983-residue chain is Bifunctional glutamine synthetase adenylyltransferase/adenylyl-removing enzyme (983 aa).

The adenylyl removase stretch occupies residues 1–468 (MTVENAKALF…KQYAALFEQA (468 aa)). Positions 473-983 (AASGNLVFTG…FDKLVGHGAD (511 aa)) are adenylyl transferase.

This sequence belongs to the GlnE family. The cofactor is Mg(2+).

The enzyme catalyses [glutamine synthetase]-O(4)-(5'-adenylyl)-L-tyrosine + phosphate = [glutamine synthetase]-L-tyrosine + ADP. It catalyses the reaction [glutamine synthetase]-L-tyrosine + ATP = [glutamine synthetase]-O(4)-(5'-adenylyl)-L-tyrosine + diphosphate. In terms of biological role, involved in the regulation of glutamine synthetase GlnA, a key enzyme in the process to assimilate ammonia. When cellular nitrogen levels are high, the C-terminal adenylyl transferase (AT) inactivates GlnA by covalent transfer of an adenylyl group from ATP to specific tyrosine residue of GlnA, thus reducing its activity. Conversely, when nitrogen levels are low, the N-terminal adenylyl removase (AR) activates GlnA by removing the adenylyl group by phosphorolysis, increasing its activity. The regulatory region of GlnE binds the signal transduction protein PII (GlnB) which indicates the nitrogen status of the cell. This chain is Bifunctional glutamine synthetase adenylyltransferase/adenylyl-removing enzyme, found in Brucella melitensis biotype 1 (strain ATCC 23456 / CCUG 17765 / NCTC 10094 / 16M).